We begin with the raw amino-acid sequence, 238 residues long: Large ribosomal subunit protein uL1 (238 aa).

The protein belongs to the universal ribosomal protein uL1 family. As to quaternary structure, part of the 50S ribosomal subunit.

Its function is as follows. Binds directly to 23S rRNA. The L1 stalk is quite mobile in the ribosome, and is involved in E site tRNA release. In terms of biological role, protein L1 is also a translational repressor protein, it controls the translation of the L11 operon by binding to its mRNA. This chain is Large ribosomal subunit protein uL1, found in Picosynechococcus sp. (strain ATCC 27264 / PCC 7002 / PR-6) (Agmenellum quadruplicatum).